Consider the following 390-residue polypeptide: Transforming growth factor beta-1 proprotein (390 aa).

The N-terminal stretch at 1 to 29 is a signal peptide; the sequence is MPPSGLRLLPLLLPLLRLLVLTPGRPAAG. The tract at residues 30-74 is straightjacket domain; that stretch reads LSTCKTIDMELVKRKRIEAIRGQILSKLRLSSPPSQGEVPPVPLP. Residues 75–271 are arm domain; that stretch reads EAVLALYNST…ATPLERAQHL (197 aa). Residues Asn-82, Asn-136, and Asn-176 are each glycosylated (N-linked (GlcNAc...) asparagine). Positions 226-252 are bowtie tail; sequence DSKDNTLQVDINGFSSSRRGDLATIHG. The Cell attachment site signature appears at 244 to 246; that stretch reads RGD. Intrachain disulfides connect Cys-285–Cys-294, Cys-293–Cys-356, Cys-322–Cys-387, and Cys-326–Cys-389.

The protein belongs to the TGF-beta family. As to quaternary structure, homodimer; disulfide-linked. Interacts with the serine proteases, HTRA1 and HTRA3: the interaction with either inhibits TGFB1-mediated signaling and the HTRA protease activity is required for this inhibition. May interact with THSD4; this interaction may lead to sequestration by FBN1 microfibril assembly and attenuation of TGFB signaling. Interacts with CD109, DPT and ASPN. Interacts with EFEMP2. Interacts with TSKU; the interaction contributes to regulation of the hair cycle. Interacts with TGFBR3. Homodimer; disulfide-linked. Interacts with transforming growth factor beta-1 (TGF-beta-1) chain; interaction is non-covalent and maintains TGF-beta-1 in a latent state; each latency-associated peptide (LAP) monomer interacts with TGF-beta-1 in the other monomer. Interacts with LTBP1; leading to regulation of TGF-beta-1 activation. Interacts with LRRC32/GARP; leading to regulation of TGF-beta-1 activation on the surface of activated regulatory T-cells (Tregs). Interacts with LRRC33/NRROS; leading to regulation of TGF-beta-1 activation in macrophages and microglia. Interacts (via cell attachment site) with integrins ITGAV and ITGB6 (ITGAV:ITGB6), leading to release of the active TGF-beta-1. Interacts with NREP; the interaction results in a decrease in TGFB1 autoinduction. Interacts with HSP90AB1; inhibits latent TGFB1 activation. In terms of assembly, homodimer; disulfide-linked. Interacts with TGF-beta receptors (TGFBR1 and TGFBR2), leading to signal transduction. Post-translationally, transforming growth factor beta-1 proprotein: The precursor proprotein is cleaved in the Golgi apparatus by FURIN to form Transforming growth factor beta-1 (TGF-beta-1) and Latency-associated peptide (LAP) chains, which remain non-covalently linked, rendering TGF-beta-1 inactive. N-glycosylated. Deglycosylation leads to activation of Transforming growth factor beta-1 (TGF-beta-1); mechanisms triggering deglycosylation-driven activation of TGF-beta-1 are however unclear.

It is found in the secreted. Its subcellular location is the extracellular space. It localises to the extracellular matrix. Functionally, transforming growth factor beta-1 proprotein: Precursor of the Latency-associated peptide (LAP) and Transforming growth factor beta-1 (TGF-beta-1) chains, which constitute the regulatory and active subunit of TGF-beta-1, respectively. Its function is as follows. Required to maintain the Transforming growth factor beta-1 (TGF-beta-1) chain in a latent state during storage in extracellular matrix. Associates non-covalently with TGF-beta-1 and regulates its activation via interaction with 'milieu molecules', such as LTBP1, LRRC32/GARP and LRRC33/NRROS, that control activation of TGF-beta-1. Interaction with LRRC33/NRROS regulates activation of TGF-beta-1 in macrophages and microglia. Interaction with LRRC32/GARP controls activation of TGF-beta-1 on the surface of activated regulatory T-cells (Tregs). Interaction with integrins (ITGAV:ITGB6 or ITGAV:ITGB8) results in distortion of the Latency-associated peptide chain and subsequent release of the active TGF-beta-1. Multifunctional protein that regulates the growth and differentiation of various cell types and is involved in various processes, such as normal development, immune function, microglia function and responses to neurodegeneration. Activation into mature form follows different steps: following cleavage of the proprotein in the Golgi apparatus, Latency-associated peptide (LAP) and Transforming growth factor beta-1 (TGF-beta-1) chains remain non-covalently linked rendering TGF-beta-1 inactive during storage in extracellular matrix. At the same time, LAP chain interacts with 'milieu molecules', such as LTBP1, LRRC32/GARP and LRRC33/NRROS that control activation of TGF-beta-1 and maintain it in a latent state during storage in extracellular milieus. TGF-beta-1 is released from LAP by integrins (ITGAV:ITGB6 or ITGAV:ITGB8): integrin-binding to LAP stabilizes an alternative conformation of the LAP bowtie tail and results in distortion of the LAP chain and subsequent release of the active TGF-beta-1. Once activated following release of LAP, TGF-beta-1 acts by binding to TGF-beta receptors (TGFBR1 and TGFBR2), which transduce signal. While expressed by many cells types, TGF-beta-1 only has a very localized range of action within cell environment thanks to fine regulation of its activation by Latency-associated peptide chain (LAP) and 'milieu molecules'. Plays an important role in bone remodeling: acts as a potent stimulator of osteoblastic bone formation, causing chemotaxis, proliferation and differentiation in committed osteoblasts. Can promote either T-helper 17 cells (Th17) or regulatory T-cells (Treg) lineage differentiation in a concentration-dependent manner. At high concentrations, leads to FOXP3-mediated suppression of RORC and down-regulation of IL-17 expression, favoring Treg cell development. At low concentrations in concert with IL-6 and IL-21, leads to expression of the IL-17 and IL-23 receptors, favoring differentiation to Th17 cells. Stimulates sustained production of collagen through the activation of CREB3L1 by regulated intramembrane proteolysis (RIP). Mediates SMAD2/3 activation by inducing its phosphorylation and subsequent translocation to the nucleus. Positively regulates odontoblastic differentiation in dental papilla cells, via promotion of IPO7-mediated translocation of phosphorylated SMAD2 to the nucleus and subsequent transcription of target genes. Can induce epithelial-to-mesenchymal transition (EMT) and cell migration in various cell types. The protein is Transforming growth factor beta-1 proprotein (TGFB1) of Canis lupus familiaris (Dog).